The chain runs to 541 residues: Chaperonin GroEL 2 (541 aa).

ATP contacts are provided by residues 30–33, Lys-51, 87–91, Gly-415, and Asp-496; these read TLGP and DGTTT.

This sequence belongs to the chaperonin (HSP60) family. In terms of assembly, forms a cylinder of 14 subunits composed of two heptameric rings stacked back-to-back. Interacts with the co-chaperonin GroES.

It is found in the cytoplasm. The catalysed reaction is ATP + H2O + a folded polypeptide = ADP + phosphate + an unfolded polypeptide.. In terms of biological role, together with its co-chaperonin GroES, plays an essential role in assisting protein folding. The GroEL-GroES system forms a nano-cage that allows encapsulation of the non-native substrate proteins and provides a physical environment optimized to promote and accelerate protein folding. In Gluconacetobacter diazotrophicus (strain ATCC 49037 / DSM 5601 / CCUG 37298 / CIP 103539 / LMG 7603 / PAl5), this protein is Chaperonin GroEL 2.